The chain runs to 317 residues: Phospholipase A1 1 (317 aa).

The N-terminal stretch at 1–7 (RLIMFVG) is a signal peptide. Residues 8 to 17 (DPSSSNELDR) constitute a propeptide that is removed on maturation. The cysteines at positions 21 and 104 are disulfide-linked. N-linked (GlcNAc...) asparagine glycosylation occurs at Asn-25. The Nucleophile role is filled by Ser-154. Asp-182 (charge relay system) is an active-site residue. Cys-193 and Cys-198 form a disulfide bridge. N-linked (GlcNAc...) asparagine glycosylation occurs at Asn-229. Cys-236 and Cys-244 form a disulfide bridge. His-246 (charge relay system) is an active-site residue. Intrachain disulfides connect Cys-261/Cys-285, Cys-262/Cys-310, and Cys-278/Cys-283.

Belongs to the AB hydrolase superfamily. Lipase family. In terms of tissue distribution, expressed by the venom gland.

Its subcellular location is the secreted. The catalysed reaction is a 1,2-diacyl-sn-glycero-3-phosphocholine + H2O = a 2-acyl-sn-glycero-3-phosphocholine + a fatty acid + H(+). Its function is as follows. Catalyzes the hydrolysis of phosphatidylcholine with phospholipase A1 activity. May act as an allergen and induce hemolytic activity. The sequence is that of Phospholipase A1 1 from Dolichovespula maculata (Bald-faced hornet).